Consider the following 330-residue polypeptide: Protein qutG (330 aa).

Mg(2+) contacts are provided by Glu-78, Asp-100, Leu-102, Asp-103, and Asp-251. Glu-78 is a binding site for substrate. Residues Leu-102–Thr-105 and Asp-251 each bind substrate.

This sequence belongs to the inositol monophosphatase superfamily.

Its function is as follows. Not known. Probably involved in quinate metabolism. In Emericella nidulans (strain FGSC A4 / ATCC 38163 / CBS 112.46 / NRRL 194 / M139) (Aspergillus nidulans), this protein is Protein qutG (qutG).